The sequence spans 460 residues: uncharacterized protein (460 aa).

A TRAM domain is found at 9–67 (NFKKNDIFEAEVLDLTHEGQGVVKIDSFPFFVDNALPGERIKMHVLKVGKSFGFGRVDE). Residues Q292, Y321, E342, and D390 each coordinate S-adenosyl-L-methionine. C417 functions as the Nucleophile in the catalytic mechanism.

This sequence belongs to the class I-like SAM-binding methyltransferase superfamily. RNA M5U methyltransferase family.

This is an uncharacterized protein from Lactococcus lactis subsp. lactis (strain IL1403) (Streptococcus lactis).